The following is a 147-amino-acid chain: Cyanate hydratase (147 aa).

Active-site residues include R88, E91, and S114.

Belongs to the cyanase family.

It catalyses the reaction cyanate + hydrogencarbonate + 3 H(+) = NH4(+) + 2 CO2. Catalyzes the reaction of cyanate with bicarbonate to produce ammonia and carbon dioxide. This Prochlorococcus marinus (strain NATL2A) protein is Cyanate hydratase.